The primary structure comprises 349 residues: Green-sensitive opsin-2 (349 aa).

Residues 1 to 36 are Extracellular-facing; it reads MNGTEGNNFYIPMSNRTGLVRSPYEYTQYYLADPWQ. N2 and N15 each carry an N-linked (GlcNAc...) asparagine glycan. The helical transmembrane segment at 37–61 threads the bilayer; the sequence is FKALAFYMFFLICFGLPINVLTLLV. The Cytoplasmic portion of the chain corresponds to 62–73; that stretch reads TAQHKKLRQPLN. Residues 74 to 99 form a helical membrane-spanning segment; the sequence is YILVNLAFAGTIMAFFGFTVTFYCSI. The Extracellular portion of the chain corresponds to 100 to 113; it reads NGYMALGPTGCAIE. C110 and C187 form a disulfide bridge. A helical transmembrane segment spans residues 114 to 133; it reads GFFATLGGQVALWSLVVLAI. The Cytoplasmic segment spans residues 134–152; that stretch reads ERYIVVCKPMGSFKFSSNH. A helical transmembrane segment spans residues 153 to 176; sequence AMAGIAFTWVMASSCAVPPLFGWS. Topologically, residues 177 to 202 are extracellular; that stretch reads RYIPEGMQTSCGPDYYTLNPEFNNES. N-linked (GlcNAc...) asparagine glycosylation occurs at N200. Residues 203 to 230 traverse the membrane as a helical segment; the sequence is YVLYMFSCHFCVPVTTIFFTYGSLVCTV. The Cytoplasmic segment spans residues 231–252; that stretch reads KAAAAQQQESESTQKAEREVTR. The chain crosses the membrane as a helical span at residues 253–276; it reads MVILMVLGFLVAWVPYASFAAWIF. The Extracellular segment spans residues 277–284; that stretch reads FNRGAAFS. Residues 285 to 309 form a helical membrane-spanning segment; sequence AQAMAIPAFFSKASALFNPIIYVLL. K296 bears the N6-(retinylidene)lysine mark. At 310 to 349 the chain is on the cytoplasmic side; the sequence is NKQFRSCMLNTLFCGKSPLGDDESSSVSTSKTEVSSVSPA. Positions 328 to 349 are disordered; that stretch reads LGDDESSSVSTSKTEVSSVSPA. Over residues 334-349 the composition is skewed to low complexity; the sequence is SSVSTSKTEVSSVSPA.

It belongs to the G-protein coupled receptor 1 family. Opsin subfamily. In terms of processing, phosphorylated on some or all of the serine and threonine residues present in the C-terminal region.

The protein resides in the membrane. Functionally, visual pigments are the light-absorbing molecules that mediate vision. They consist of an apoprotein, opsin, covalently linked to cis-retinal. This is Green-sensitive opsin-2 (opn1mw2) from Danio rerio (Zebrafish).